A 352-amino-acid polypeptide reads, in one-letter code: RAD51-associated protein 1 (352 aa).

Basic residues predominate over residues 1–10 (MVRPVRHKKP). Disordered regions lie at residues 1–78 (MVRP…TFSI) and 115–144 (TNVQ…HISN). Phosphoserine is present on residues Ser19 and Ser21. Positions 30–49 (VPLNKKSRTAPKELKQDKPK) are interaction with DNA. Positions 39–72 (APKELKQDKPKPNLNNLRKEEIPVQEKTPKKRLP) are enriched in basic and acidic residues. Thr66 is subject to Phosphothreonine. Phosphoserine occurs at positions 120 and 124. Polar residues predominate over residues 132-144 (KIETMNKSPHISN). The short motif at 154-159 (LDKITV) is the SIM motif element. The segment at 162–323 (DVGGVQGKRK…RSSSSPLVVV (162 aa)) is disordered. Acidic residues predominate over residues 188–221 (SDGDSANDTEPDFAPGEDSEDDSDFCESEDNDED). The span at 229 to 247 (VKEIKKKEVKVKSPVEKKE) shows a compositional bias: basic and acidic residues. The segment at 243 to 304 (VEKKEKKSKS…PSAESKKPKW (62 aa)) is interaction with DNA. Lys251 participates in a covalent cross-link: Glycyl lysine isopeptide (Lys-Gly) (interchain with G-Cter in ubiquitin; alternate). Lys269 participates in a covalent cross-link: Glycyl lysine isopeptide (Lys-Gly) (interchain with G-Cter in SUMO). Polar residues predominate over residues 270–284 (SESQSLPKKVSLSSD). Ser280 is modified (phosphoserine). The short motif at 304 to 307 (WVPP) is the WVPP motif element. A compositionally biased stretch (low complexity) spans 306–323 (PPAASGGSRSSSSPLVVV). Residues 313 to 352 (SRSSSSPLVVVSVKSPNQSLRLGLSRLARVKPLHPNATST) form an interaction with RAD51 region. Residue Ser327 is modified to Phosphoserine.

Monomer; elongated monodisperse monomer. Interacts (via C-terminal region) with RAD51; the interaction is direct. Interacts (via SIM motif) with WDR48/UAF1; WDR48/UAF1 and RAD51AP1 cooperate together to stimulate RAD51-mediated homologous recombination (HR). Interacts (via WVPP motif) with DMC1; the interaction is direct. Interacts with PALB2. Interacts with RAD52. As to quaternary structure, does not interact with DMC1; lack of interaction is caused by the absence of the WVPP motif in this isoform. Sumoylation with SUMO2/3 by NSMCE2/MMS21 promotes stabilization, possibly by preventing ubiquitination. Sumoylation is required for alternative lengthening of telomeres (ALT) pathway. As to expression, highly expressed in testis and thymus. Lower levels in colon and small intestine. Little or no expression in spleen, prostate, ovary and peripheral blood leukocytes.

The protein localises to the chromosome. It is found in the nucleus. Its subcellular location is the telomere. Structure-specific DNA-binding protein involved in DNA repair by promoting RAD51-mediated homologous recombination. Acts by stimulating D-Loop formation by RAD51: specifically enhances joint molecule formation through its structure-specific DNA interaction and its interaction with RAD51. Binds single-stranded DNA (ssDNA), double-stranded DNA (dsDNA) and secondary DNA structures, such as D-loop structures: has a strong preference for branched-DNA structures that are obligatory intermediates during joint molecule formation. Cooperates with WDR48/UAF1 to stimulate RAD51-mediated homologous recombination: both WDR48/UAF1 and RAD51AP1 have coordinated role in DNA-binding during homologous recombination and DNA repair. WDR48/UAF1 and RAD51AP1 also have a coordinated role in DNA-binding to promote USP1-mediated deubiquitination of FANCD2. Also involved in meiosis by promoting DMC1-mediated homologous meiotic recombination. Key mediator of alternative lengthening of telomeres (ALT) pathway, a homology-directed repair mechanism of telomere elongation that controls proliferation in aggressive cancers, by stimulating homologous recombination. May also bind RNA; additional evidences are however required to confirm RNA-binding in vivo. The polypeptide is RAD51-associated protein 1 (Homo sapiens (Human)).